The primary structure comprises 110 residues: Phosphoribosyl-AMP cyclohydrolase (110 aa).

Asp80 serves as a coordination point for Mg(2+). A Zn(2+)-binding site is contributed by Cys81. Asp82 and Asp84 together coordinate Mg(2+). Zn(2+) is bound by residues Cys97 and Cys104.

Belongs to the PRA-CH family. Homodimer. Requires Mg(2+) as cofactor. Zn(2+) serves as cofactor.

Its subcellular location is the cytoplasm. It carries out the reaction 1-(5-phospho-beta-D-ribosyl)-5'-AMP + H2O = 1-(5-phospho-beta-D-ribosyl)-5-[(5-phospho-beta-D-ribosylamino)methylideneamino]imidazole-4-carboxamide. Its pathway is amino-acid biosynthesis; L-histidine biosynthesis; L-histidine from 5-phospho-alpha-D-ribose 1-diphosphate: step 3/9. Its function is as follows. Catalyzes the hydrolysis of the adenine ring of phosphoribosyl-AMP. This chain is Phosphoribosyl-AMP cyclohydrolase, found in Clostridium botulinum (strain ATCC 19397 / Type A).